We begin with the raw amino-acid sequence, 194 residues long: ATP-dependent Clp protease proteolytic subunit (194 aa).

Ser97 serves as the catalytic Nucleophile. His122 is an active-site residue.

Belongs to the peptidase S14 family. Fourteen ClpP subunits assemble into 2 heptameric rings which stack back to back to give a disk-like structure with a central cavity, resembling the structure of eukaryotic proteasomes.

The protein resides in the cytoplasm. The enzyme catalyses Hydrolysis of proteins to small peptides in the presence of ATP and magnesium. alpha-casein is the usual test substrate. In the absence of ATP, only oligopeptides shorter than five residues are hydrolyzed (such as succinyl-Leu-Tyr-|-NHMec, and Leu-Tyr-Leu-|-Tyr-Trp, in which cleavage of the -Tyr-|-Leu- and -Tyr-|-Trp bonds also occurs).. Its function is as follows. Cleaves peptides in various proteins in a process that requires ATP hydrolysis. Has a chymotrypsin-like activity. Plays a major role in the degradation of misfolded proteins. This Carsonella ruddii (strain PV) protein is ATP-dependent Clp protease proteolytic subunit.